The chain runs to 141 residues: Putative ankyrin repeat protein FPV223 (141 aa).

ANK repeat units lie at residues 21-50 (SGRTSLHYAVLFNHKRALSFLLARGADVFK), 54-83 (CMCTPLYYAMLSDQRDMVTMLLHSKKYIVK), 85-114 (RNKLDLHNAIETGNIKVIKTLLDNGVNENS), and 118-140 (DGLTPLHYAVKYGNISIVKMFVI).

The protein is Putative ankyrin repeat protein FPV223 of Vertebrata (FPV).